Consider the following 158-residue polypeptide: UPF0260 protein RHECIAT_CH0001358 (158 aa).

The protein belongs to the UPF0260 family.

This chain is UPF0260 protein RHECIAT_CH0001358, found in Rhizobium etli (strain CIAT 652).